The chain runs to 284 residues: Bifunctional protein FolD (284 aa).

NADP(+) contacts are provided by residues Gly164 to Ser166 and Ile230.

The protein belongs to the tetrahydrofolate dehydrogenase/cyclohydrolase family. In terms of assembly, homodimer.

It catalyses the reaction (6R)-5,10-methylene-5,6,7,8-tetrahydrofolate + NADP(+) = (6R)-5,10-methenyltetrahydrofolate + NADPH. The catalysed reaction is (6R)-5,10-methenyltetrahydrofolate + H2O = (6R)-10-formyltetrahydrofolate + H(+). The protein operates within one-carbon metabolism; tetrahydrofolate interconversion. Catalyzes the oxidation of 5,10-methylenetetrahydrofolate to 5,10-methenyltetrahydrofolate and then the hydrolysis of 5,10-methenyltetrahydrofolate to 10-formyltetrahydrofolate. The sequence is that of Bifunctional protein FolD from Mycoplasma capricolum subsp. capricolum (strain California kid / ATCC 27343 / NCTC 10154).